A 597-amino-acid chain; its full sequence is Nuclear factor erythroid 2-related factor 2 (597 aa).

A DLG motif motif is present at residues 29–31; it reads DLG. At serine 40 the chain carries Phosphoserine; by PKC. An ETGE motif motif is present at residues 79-82; the sequence is ETGE. Residue serine 207 is modified to Phosphoserine. The segment at 327 to 440 is disordered; the sequence is TMEFNDSDSG…APFTKDKHSS (114 aa). Polar residues predominate over residues 333 to 345; that stretch reads SDSGISLNTSPSR. N-linked (Glc) (glycation) lysine glycans are attached at residues lysine 454, lysine 464, and lysine 479. One can recognise a bZIP domain in the interval 489–552; that stretch reads LIRDIRRRGK…HLLKRRLSTL (64 aa). Residue arginine 491 is glycosylated (N-linked (Glc) (glycation) arginine). The basic motif stretch occupies residues 491 to 510; that stretch reads RDIRRRGKNKVAAQNCRKRK. The leucine-zipper stretch occupies residues 514-521; that stretch reads IVELEQDL. Arginine 561 carries an N-linked (Glc) (glycation) arginine glycan. The disordered stretch occupies residues 563 to 597; that stretch reads EDGKPYSPSEYSLQQTRDGNVFLVPKSKKPDTKKN. N-linked (Glc) (glycation) lysine glycosylation occurs at lysine 566. The span at 571-580 shows a compositional bias: polar residues; the sequence is SEYSLQQTRD. Residues 583 to 588 are mediates interaction with CHD6 and is necessary to activate transcription; the sequence is VFLVPK. N6-acetyllysine; by CREBBP is present on residues lysine 588 and lysine 591.

Belongs to the bZIP family. CNC subfamily. As to quaternary structure, heterodimer; heterodimerizes with small Maf proteins. Interacts (via the bZIP domain) with MAFG and MAFK; required for binding to antioxidant response elements (AREs) on DNA. Interacts with KEAP1; the interaction is direct and promotes ubiquitination by the BCR(KEAP1) E3 ubiquitin ligase complex. Forms a ternary complex with PGAM5 and KEAP1. Interacts with EEF1D at heat shock promoter elements (HSE). Interacts via its leucine-zipper domain with the coiled-coil domain of PMF1. Interacts with CHD6; involved in activation of the transcription. Interacts with ESRRB; represses NFE2L2 transcriptional activity. Interacts with MOTS-c, a peptide produced by the mitochondrially encoded 12S rRNA MT-RNR1; the interaction occurs in the nucleus following metabolic stress. Post-translationally, ubiquitinated in the cytoplasm by the BCR(KEAP1) E3 ubiquitin ligase complex leading to its degradation. In response to oxidative stress, electrophile metabolites, such as sulforaphane, modify KEAP1, leading to inhibit activity of the BCR(KEAP1) complex, promoting NFE2L2/NRF2 nuclear accumulation and activity. In response to autophagy, the BCR(KEAP1) complex is inactivated. In terms of processing, phosphorylated by EIF2AK3/PERK following unfolded protein response (UPR), promoting dissociation from its cytoplasmic inhibitor KEAP1, followed by its translocation into the nucleus. Phosphorylation of Ser-40 by PKC in response to oxidative stress dissociates NFE2L2 from its cytoplasmic inhibitor KEAP1, promoting its translocation into the nucleus. Acetylation at Lys-588 and Lys-591 increases nuclear localization whereas deacetylation by SIRT1 enhances cytoplasmic presence. Post-translationally, glycation impairs transcription factor activity by preventing heterodimerization with small Maf proteins. Deglycation by FN3K restores activity. Widely expressed. Highest expression in liver, skeletal muscle, luminal cells of the stomach and intestine, lining of the bronchi and alveoli, and in renal tubules; followed by heart, spleen, testis and brain.

The protein localises to the cytoplasm. The protein resides in the cytosol. It localises to the nucleus. In terms of biological role, transcription factor that plays a key role in the response to oxidative stress: binds to antioxidant response (ARE) elements present in the promoter region of many cytoprotective genes, such as phase 2 detoxifying enzymes, and promotes their expression, thereby neutralizing reactive electrophiles. In normal conditions, ubiquitinated and degraded in the cytoplasm by the BCR(KEAP1) complex. In response to oxidative stress, electrophile metabolites inhibit activity of the BCR(KEAP1) complex, promoting nuclear accumulation of NFE2L2/NRF2, heterodimerization with one of the small Maf proteins and binding to ARE elements of cytoprotective target genes. The NFE2L2/NRF2 pathway is also activated in response to selective autophagy: autophagy promotes interaction between KEAP1 and SQSTM1/p62 and subsequent inactivation of the BCR(KEAP1) complex, leading to NFE2L2/NRF2 nuclear accumulation and expression of cytoprotective genes. The NFE2L2/NRF2 pathway is also activated during the unfolded protein response (UPR), contributing to redox homeostasis and cell survival following endoplasmic reticulum stress. May also be involved in the transcriptional activation of genes of the beta-globin cluster by mediating enhancer activity of hypersensitive site 2 of the beta-globin locus control region. Also plays an important role in the regulation of the innate immune response. It is a critical regulator of the innate immune response and survival during sepsis by maintaining redox homeostasis and restraint of the dysregulation of pro-inflammatory signaling pathways like MyD88-dependent and -independent and TNF-alpha signaling. Suppresses macrophage inflammatory response by blocking pro-inflammatory cytokine transcription and the induction of IL6. Binds to the proximity of pro-inflammatory genes in macrophages and inhibits RNA Pol II recruitment. The inhibition is independent of the Nrf2-binding motif and reactive oxygen species level. Represses antiviral cytosolic DNA sensing by suppressing the expression of the adapter protein STING1 and decreasing responsiveness to STING1 agonists while increasing susceptibility to infection with DNA viruses. This Mus musculus (Mouse) protein is Nuclear factor erythroid 2-related factor 2.